The following is a 193-amino-acid chain: tRNA (cytidine(56)-2'-O)-methyltransferase (193 aa).

S-adenosyl-L-methionine-binding positions include Leu-86 and 115-119 (GGEKV).

It belongs to the aTrm56 family. In terms of assembly, homodimer.

It localises to the cytoplasm. It carries out the reaction cytidine(56) in tRNA + S-adenosyl-L-methionine = 2'-O-methylcytidine(56) in tRNA + S-adenosyl-L-homocysteine + H(+). Functionally, specifically catalyzes the AdoMet-dependent 2'-O-ribose methylation of cytidine at position 56 in tRNAs. The chain is tRNA (cytidine(56)-2'-O)-methyltransferase from Haloquadratum walsbyi (strain DSM 16790 / HBSQ001).